Here is a 189-residue protein sequence, read N- to C-terminus: FAS1 domain-containing protein mug57 (189 aa).

The first 24 residues, 1–24, serve as a signal peptide directing secretion; that stretch reads MMKLFCLNIFRFLYTTSFISAVLS. One can recognise an FAS1 domain in the interval 37-182; the sequence is EPRLFELLAE…GEMWVLNATL (146 aa).

It localises to the cytoplasm. Its subcellular location is the nucleus. It is found in the membrane. In terms of biological role, has a role in sporulation. The sequence is that of FAS1 domain-containing protein mug57 (mug57) from Schizosaccharomyces pombe (strain 972 / ATCC 24843) (Fission yeast).